The chain runs to 349 residues: Fe(3+) ions import ATP-binding protein FbpC (349 aa).

The region spanning L7–M237 is the ABC transporter domain. G39–T46 provides a ligand contact to ATP.

The protein belongs to the ABC transporter superfamily. Fe(3+) ion importer (TC 3.A.1.10) family. In terms of assembly, the complex is composed of two ATP-binding proteins (FbpC), two transmembrane proteins (FbpB) and a solute-binding protein (FbpA).

It localises to the cell inner membrane. It carries out the reaction Fe(3+)(out) + ATP + H2O = Fe(3+)(in) + ADP + phosphate + H(+). Functionally, part of the ABC transporter complex FbpABC involved in Fe(3+) ions import. Responsible for energy coupling to the transport system. The protein is Fe(3+) ions import ATP-binding protein FbpC of Pasteurella multocida (strain Pm70).